A 297-amino-acid polypeptide reads, in one-letter code: MDLTGRRAVVTGGASGLGAETVRALAAAGAEVTIATRHPQSAEPLVQEAAAAGAGRVHAEALDLSDVASVDSFARAWRGPLDILVANAGIMALPTRTLTPYGWEMQLATNYLGHFALATGLHAALRDAGSARIVVVSSGAHLGTPFDFEDPHFARRPYDPWAAYGNSKTADVLFTVGARRWAADGITANALNPGYILTRLQRHVDDETMRAFGVMDDQGNVKPLPYYKTPEQGAATSVLLAASPLLNGVTGRYFEDNQEARTVEDGDVQPGGVAAHALDPEAADRLWEYGADTLSAG.

9-33 (VVTGGASGLGAETVRALAAAGAEVT) lines the NAD(+) pocket. Residue S138 coordinates substrate. The active-site Proton acceptor is the Y164.

This sequence belongs to the short-chain dehydrogenases/reductases (SDR) family.

The polypeptide is Probable oxidoreductase (Streptomyces lividans).